Here is a 265-residue protein sequence, read N- to C-terminus: UPF0246 protein NT01EI_0662 (265 aa).

The protein belongs to the UPF0246 family.

The sequence is that of UPF0246 protein NT01EI_0662 from Edwardsiella ictaluri (strain 93-146).